Consider the following 515-residue polypeptide: MEELQGYLEKDGSRQQNFLYPLIFQEYIYTLAHDHGLNSSIFYEPMEIVGLGYDNKSSSVLVKRLITRMYQQNSLIYSMNDFNQNRFVGHNNSFYSNLDSQMVSEGFAVIVEIPFSLRLVPSSEEIPKSQNLRSIHSIFPFLEDKLSHLNYVLDILIPYPIHLEILVQILQCWIQDVPSLHFLRLFLHEFHNWNNLITPTKSISVFSKENKRLFRILYNSYVSEYEFVFVFLRKQSYYLRSTSSRAFLERTHFYVKIEHLIDVCHNHFQKILWFFKDSFMHYVRYKGKAILASRGTYLLIKKWKCYLVNFWQYNFHFWSKPYRIHINPFSNYSFYFLGYISSVLINPSAVKNQMLENFYLVDTLTQNSITIVPVIPLIGSLSKAKFCTILGHPISKPIWAELSDSDIIDRFGRICRNLSHYHSGSSKKQSLYRIKYILRLSCARTLARKHKSTVRNLLQRLGSGLLEEFFTEEEQVISPIFPKTTLFPLHGSHKERIWYLDIIRINDLANYLDWS.

Belongs to the intron maturase 2 family. MatK subfamily.

It is found in the plastid. The protein resides in the chloroplast. Its function is as follows. Usually encoded in the trnK tRNA gene intron. Probably assists in splicing its own and other chloroplast group II introns. The protein is Maturase K of Trillium luteum (Yellow wakerobin).